We begin with the raw amino-acid sequence, 393 residues long: DNA-directed RNA polymerase subunit Rpo1C (393 aa).

The protein belongs to the RNA polymerase beta' chain family. Part of the RNA polymerase complex.

The protein localises to the cytoplasm. It carries out the reaction RNA(n) + a ribonucleoside 5'-triphosphate = RNA(n+1) + diphosphate. In terms of biological role, DNA-dependent RNA polymerase (RNAP) catalyzes the transcription of DNA into RNA using the four ribonucleoside triphosphates as substrates. Forms part of the jaw domain. This is DNA-directed RNA polymerase subunit Rpo1C from Thermococcus celer.